The following is a 203-amino-acid chain: MQSNIMKIIIIVSLLIVVGTLYVLLSLSTPKKPLAGQVNIYKDNIKIGEAFELIDQNGEIFNSNKLRGHLSLIYFGFTSCPDICPTFLNKMTNIVEILHQNQIDIIPIFITIDPKRDTPEVLKEYIKNFHPKFICLTGNEHQIKDVTDKFKILYARVNGYDDDQNYMIDHSSFTYLIDKNGKYIKHFYLDISAKEIMEFLRNE.

One can recognise a Thioredoxin domain in the interval lysine 42–glutamate 203. Cu cation is bound by residues cysteine 80, cysteine 84, and histidine 170.

It belongs to the SCO1/2 family.

The sequence is that of SCO2-like protein RT0576 from Rickettsia typhi (strain ATCC VR-144 / Wilmington).